The chain runs to 125 residues: Fluoride-specific ion channel FluC (125 aa).

The next 4 helical transmembrane spans lie at 7–27 (FFIV…MAVV), 36–56 (GFPY…GFLS), 63–83 (PYGR…FSTF), and 96–116 (FIFA…GVFC). Residues glycine 75 and threonine 78 each contribute to the Na(+) site.

The protein belongs to the fluoride channel Fluc/FEX (TC 1.A.43) family.

Its subcellular location is the cell inner membrane. The enzyme catalyses fluoride(in) = fluoride(out). With respect to regulation, na(+) is not transported, but it plays an essential structural role and its presence is essential for fluoride channel function. Its function is as follows. Fluoride-specific ion channel. Important for reducing fluoride concentration in the cell, thus reducing its toxicity. This is Fluoride-specific ion channel FluC from Elusimicrobium minutum (strain Pei191).